Consider the following 806-residue polypeptide: GPI ethanolamine phosphate transferase 2 (806 aa).

Residues Asn70, Asn184, and Asn242 are each glycosylated (N-linked (GlcNAc...) asparagine). 3 helical membrane passes run 396–416 (MLFL…YCYI), 425–445 (SVLM…SSFV), and 451–471 (IWWW…PSCT). A glycan (N-linked (GlcNAc...) asparagine) is linked at Asn488. Helical transmembrane passes span 508–528 (PSIK…DGFT), 532–552 (LLSI…TCWA), 593–613 (LFFK…VVFA), 624–644 (LFTI…FLVF), 664–684 (CEMF…QFGG), 706–726 (IYVV…YWSL), 745–765 (LSSM…CICM), and 782–804 (LLGW…LLMV).

Belongs to the PIGG/PIGN/PIGO family. PIGG subfamily.

It localises to the endoplasmic reticulum membrane. Its pathway is glycolipid biosynthesis; glycosylphosphatidylinositol-anchor biosynthesis. In terms of biological role, ethanolamine phosphate transferase involved in glycosylphosphatidylinositol-anchor biosynthesis. Transfers ethanolamine phosphate to the GPI second mannose. The polypeptide is GPI ethanolamine phosphate transferase 2 (LAS21) (Eremothecium gossypii (strain ATCC 10895 / CBS 109.51 / FGSC 9923 / NRRL Y-1056) (Yeast)).